Reading from the N-terminus, the 351-residue chain is Molybdate-binding protein MolA (351 aa).

The N-terminal stretch at 1-21 (MKLKSLLIACLLSSLSFSALA) is a signal peptide. Residues 41-322 (RAVVLQHQTL…WLAKALYPQR (282 aa)) enclose the Fe/B12 periplasmic-binding domain. Residues 47–48 (HQ), Tyr217, Arg264, and 300–301 (GY) each bind molybdate.

Belongs to the bacterial solute-binding protein 8 family. As to quaternary structure, the complex is composed of two ATP-binding proteins (MolC), two transmembrane proteins (MolB) and a solute-binding protein (MolA).

Its subcellular location is the periplasm. With respect to regulation, the MolBCA complex shows a decrease in affinity in the presence of increasing concentrations of substrate and nucleotide. Its function is as follows. Part of the ABC transporter complex MolBCA involved in molybdate import. Functions as a low-affinity molybdate transporter. Binds to both molybdate and tungstate, but not to sulfate or phosphate. The sequence is that of Molybdate-binding protein MolA from Haemophilus influenzae (strain ATCC 51907 / DSM 11121 / KW20 / Rd).